The following is a 390-amino-acid chain: Alcohol dehydrogenase-like 7 (390 aa).

Zn(2+) is bound by residues C56, S58, H78, C108, C111, C114, C122, and C187. Residues S58 and H78 each coordinate an alcohol. S58 provides a ligand contact to NAD(+). NAD(+) contacts are provided by residues 212–217 (GLGSIG), D236, K241, 306–308 (LGV), F334, and R384.

This sequence belongs to the zinc-containing alcohol dehydrogenase family. Class-III subfamily. Homodimer. Zn(2+) is required as a cofactor.

It localises to the cytoplasm. It carries out the reaction a primary alcohol + NAD(+) = an aldehyde + NADH + H(+). The enzyme catalyses a secondary alcohol + NAD(+) = a ketone + NADH + H(+). The polypeptide is Alcohol dehydrogenase-like 7 (Arabidopsis thaliana (Mouse-ear cress)).